The chain runs to 437 residues: MDSITQLEARANEVAAAARRLAEYCRNARVDGACLPAVVPSEAPRAIREIQRLLLSNVDHLQILLTEPADLVQRLAVQSQLLSCLQWLGEFQVLACLPLTDTVSIADLARLSGVPEAQLARIIRFTITIGFLQEPQRGHVAHSPLSSLFVSRPSLRDAVMFLADSAAPTALQMASATGRFGDTVASETDTAYNIAFDHRDPFYFACEQRPKLQRRWSAYLQHTGGDARDLTQQVLSRVDWFNLNNACVVEVLGPQSQSVTMMLDQLHPMLHFIVQEARIPNGSTHAALHQDVRSVQIRELGGPQRVRDAAIYILNLGPLPHAILSTSVLTELRAHFSVLAANSCAMLILTAGLLLPKPGAVDARVETSVRLHDLSLLQLANDRLMEEDELVEMVHGVKDSVGRLAVVNRLHLPCTTTVALGVRYQAFGHGDSSAKSL.

The HTH iclR-type domain occupies 75–144 (LAVQSQLLSC…PQRGHVAHSP (70 aa)). The H-T-H motif DNA-binding region spans 105–124 (IADLARLSGVPEAQLARIIR).

Specifically expressed in conidia.

The protein resides in the nucleus. Functionally, transcriptional coactivator; part of the gene cluster that mediates the biosynthesis of trypacidin, a mycotoxin with antiprotozoal activity and that plays a role in the infection process. With tpcE, coregulates the production of trypacidin. This chain is Trypacidin cluster transcriptional coactivator tpcD, found in Aspergillus fumigatus (strain ATCC MYA-4609 / CBS 101355 / FGSC A1100 / Af293) (Neosartorya fumigata).